We begin with the raw amino-acid sequence, 842 residues long: Protein P (842 aa).

The interval 1 to 177 is terminal protein domain (TP); it reads MPLSYQHFRR…FCGSPYTWEQ (177 aa). Residues 178-345 form a spacer region; the sequence is DLQHGAFLDG…YCLSHLVNLL (168 aa). Positions 184-238 are disordered; that stretch reads FLDGPSRVGKEPFRQQSSRIPSRSPVGPSIQSKYQQSRLGLQSQKGPLARGQQGR. Residues 197 to 208 are compositionally biased toward low complexity; that stretch reads RQQSSRIPSRSP. The segment covering 212–228 has biased composition (polar residues); sequence SIQSKYQQSRLGLQSQK. Residues 346–689 are polymerase/reverse transcriptase domain (RT); that stretch reads QDWGPCTEHG…YMNLYPVARQ (344 aa). The region spanning 356 to 599 is the Reverse transcriptase domain; sequence EHHIRIPRTP…YSLNFMGYVI (244 aa). Residues Asp428, Asp550, and Asp551 each coordinate Mg(2+).

This sequence belongs to the hepadnaviridae P protein family.

It catalyses the reaction DNA(n) + a 2'-deoxyribonucleoside 5'-triphosphate = DNA(n+1) + diphosphate. It carries out the reaction Endonucleolytic cleavage to 5'-phosphomonoester.. Activated by host HSP70 and HSP40 in vitro to be able to bind the epsilon loop of the pgRNA. Because deletion of the RNase H region renders the protein partly chaperone-independent, the chaperones may be needed indirectly to relieve occlusion of the RNA-binding site by this domain. Inhibited by several reverse-transcriptase inhibitors: Lamivudine, Adefovir and Entecavir. Its function is as follows. Multifunctional enzyme that converts the viral RNA genome into dsDNA in viral cytoplasmic capsids. This enzyme displays a DNA polymerase activity that can copy either DNA or RNA templates, and a ribonuclease H (RNase H) activity that cleaves the RNA strand of RNA-DNA heteroduplexes in a partially processive 3'- to 5'-endonucleasic mode. Neo-synthesized pregenomic RNA (pgRNA) are encapsidated together with the P protein, and reverse-transcribed inside the nucleocapsid. Initiation of reverse-transcription occurs first by binding the epsilon loop on the pgRNA genome, and is initiated by protein priming, thereby the 5'-end of (-)DNA is covalently linked to P protein. Partial (+)DNA is synthesized from the (-)DNA template and generates the relaxed circular DNA (RC-DNA) genome. After budding and infection, the RC-DNA migrates in the nucleus, and is converted into a plasmid-like covalently closed circular DNA (cccDNA). The activity of P protein does not seem to be necessary for cccDNA generation, and is presumably released from (+)DNA by host nuclear DNA repair machinery. The protein is Protein P of Hepatitis B virus genotype G (isolate IG29227/2000) (HBV-G).